Reading from the N-terminus, the 256-residue chain is MSSTAFTSSLSNWDLYPTNGSITPHLLLVGAQILFLSGPHFHGRRTLAATTILSLAAIAQYNRFTNNPGVANLFALAWPHWLSAVEKIVFASPEGPEADLWRVDRVPREAMSWPVFGWRKVKWAVTLLLNLRGIRWSFQVKNVPKMPERMTRGQFLRWRLGELVWVLLMTDLVSQMMLRFFFTDAAGALGNLDSKYITIRDARWGWSLLKALTFGLGPYFFINMQYLVVSILAVAMGISRPEVGSCPPRRSNRQPC.

N19 carries an N-linked (GlcNAc...) asparagine glycan. 3 helical membrane passes run S21 to F41, L163 to T183, and F214 to V234.

Its subcellular location is the membrane. It participates in mycotoxin biosynthesis. In terms of biological role, part of the gene cluster that mediates the biosynthesis of aspirochlorine (or antibiotic A30641), an unusual halogenated spiro compound with distinctive antifungal properties due to selective inhibition of protein biosynthesis, and which is also active against bacteria, viruses, and murine tumor cells. The non-ribosomal peptide synthetase (NRPS) aclP is responsible the formation of the diketopiperazine (DKP) core from the condensation of 2 phenylalanine residues. One Phe residue is tailored into chlorotyrosine by hydroxylation and chlorination, whereas the second Phe undergoes an unprecedented C-C bond cleavage to be converted into glycine. After formation of the DKP, sulfur is incorporated into the DKP by conjugation with glutathione by aclG, followed by its stepwise degradation to the thiol by aclI, aclJ and aclK, and the dithiol oxidation by aclT. In addition, oxygenases (aclB, aclC, aclL and aclO) and O-methyltransferases (aclM and aclU) act as tailoring enzymes to produce the intermediate dechloroaspirochlorine. Ultimately, chlorination of dechloroaspirochlorine by the halogenase aclH is the last step in the aspirochlorine pathway. In Aspergillus oryzae (strain ATCC 42149 / RIB 40) (Yellow koji mold), this protein is Aspirochlorine biosynthesis protein F.